Consider the following 49-residue polypeptide: Large ribosomal subunit protein bL32c (49 aa).

Residues Met1 to Ala23 are disordered.

Belongs to the bacterial ribosomal protein bL32 family.

The protein localises to the plastid. It localises to the chloroplast. The polypeptide is Large ribosomal subunit protein bL32c (Oltmannsiellopsis viridis (Marine flagellate)).